Here is a 412-residue protein sequence, read N- to C-terminus: MPLQLLLLLILLGPGNSLQLWDTWADEAEKALGPLLARDRRQATEYEYLDYDFLPETEPPEMLRNSTDTTPLTGPGTPESTTVEPAARRSTGLDAGGAVTELTTELANMGNLSTDSAAMEIQTTQPAATEAQTTQPVPTEAQTTPLAATEAQTTRLTATEAQTTPLAATEAQTTPPAATEAQTTQPTGLEAQTTAPAAMEAQTTAPAAMEAQTTPPAAMEAQTTQTTAMEAQTTAPEATEAQTTQPTATEAQTTPLAAMEALSTEPSATEALSMEPTTKRGLFIPFSVSSVTHKGIPMAASNLSVNYPVGAPDHISVKQCLLAILILALVATIFFVCTVVLAVRLSRKGHMYPVRNYSPTEMVCISSLLPDGGEGPSATANGGLSKAKSPGLTPEPREDREGDDLTLHSFLP.

Positions 1–17 are cleaved as a signal peptide; that stretch reads MPLQLLLLLILLGPGNS. Positions 18–41 are excised as a propeptide; the sequence is LQLWDTWADEAEKALGPLLARDRR. Topologically, residues 18 to 320 are extracellular; that stretch reads LQLWDTWADE…APDHISVKQC (303 aa). Position 42 is a pyrrolidone carboxylic acid (Q42). A sulfotyrosine mark is found at Y46, Y48, and Y51. Residues 56 to 95 form a disordered region; the sequence is ETEPPEMLRNSTDTTPLTGPGTPESTTVEPAARRSTGLDA. O-linked (GalNAc...) threonine glycosylation is present at T57. A glycan (N-linked (GlcNAc...) asparagine) is linked at N65. The segment covering 66–82 has biased composition (low complexity); sequence STDTTPLTGPGTPESTT. An N-linked (GlcNAc...) asparagine glycan is attached at N111. Repeat copies occupy residues 122 to 131, 132 to 141, 142 to 151, 162 to 171, 182 to 191, 192 to 201, 202 to 211, 212 to 221, 222 to 231, 232 to 241, 242 to 251, and 252 to 261. The interval 122–261 is 12 X 10 AA tandem repeats; sequence QTTQPAATEA…QTTPLAAMEA (140 aa). Disordered regions lie at residues 125–146 and 166–252; these read QPAATEAQTTQPVPTEAQTTPL and LAAT…TEAQ. A glycan (N-linked (GlcNAc...) asparagine) is linked at N302. The chain crosses the membrane as a helical span at residues 321-341; the sequence is LLAILILALVATIFFVCTVVL. The Cytoplasmic segment spans residues 342–412; that stretch reads AVRLSRKGHM…DDLTLHSFLP (71 aa). A disordered region spans residues 374 to 412; that stretch reads EGPSATANGGLSKAKSPGLTPEPREDREGDDLTLHSFLP. Positions 395–406 are enriched in basic and acidic residues; the sequence is EPREDREGDDLT. Position 406 is a phosphothreonine (T406). Residue S409 is modified to Phosphoserine.

In terms of assembly, homodimer; disulfide-linked. Interaction with P-, E- and L-selectins, through their lectin/EGF domains, is required for promoting recruitment and rolling of leukocytes. These interactions require sialyl Lewis X glycan modification but there is a differing dependence for tyrosine sulfations. Sulfation on Tyr-51 of PSGL1 is most important for high affinity L-selectin/SELL binding while P-selectin/SELP requires sulfation on Tyr-48. E-selectin/SELE binds with much lower affinity and requires the sLe(x) epitope, but apparently not tyrosine sulfation. Dimerization appears not to be required for P-selectin/SELP binding. Interacts with SNX20. Interacts with MSN and SYK; mediates the activation of SYK by SELPLG. Interacts with HAVCR1. As to quaternary structure, (Microbial infection) Interacts with enterovirus 71 capsid proteins. (Microbial infection) Interacts with Staphylococcus aureus proteins SSL5 and SSL11; these interactions prevent SELPLG-mediated neutrophil rolling. Displays complex, core-2, sialylated and fucosylated O-linked oligosaccharides, at least some of which appear to contain poly-N-acetyllactosamine with varying degrees of substitution. Mainly disialylated or neutral forms of the core-2 tetrasaccharide, Galbeta1--&gt;4GlcNAcbeta1--&gt;6(Galbeta1--&gt;3)GalNAcOH. The GlcN:GalN ratio is approximately 2:1 and the Man:Fuc ratio 3:5. Contains about 14% fucose with alpha-1,3 linkage present in two forms: One species is a disialylated, monofucosylated glycan, and the other, a monosialylated, trifucosylated glycan with a polylactosamine backbone. The fucosylated forms carry the Lewis antigen and are important for interaction with selectins and for functioning in leukocyte rolling. The modification containing the sialyl Lewis X glycan is on Thr-57. No sulfated O-glycans. Some N-glycosylation. In terms of processing, sulfation, in conjunction with the SLe(x)-containing glycan, is necessary for P- and L-selectin binding. High affinity P-selectin binding has a preferred requirement for the isomer sulfated on both Tyr-48 and Tyr-51, whereas L-selectin binding requires predominantly sulfation on Tyr-51 with sulfation on Tyr-48 playing only a minor role. These sulfations play an important role in L- and P-selectin-mediated neutrophil recruitment, and leukocyte rolling. In terms of tissue distribution, expressed on neutrophils, monocytes and most lymphocytes.

The protein localises to the membrane. Its function is as follows. An SLe(x)-type proteoglycan, which through high affinity, calcium-dependent interactions with E-, P- and L-selectins, mediates rapid rolling of leukocytes over vascular surfaces during the initial steps in inflammation. Critical for the initial leukocyte capture. Functionally, (Microbial infection) Acts as a receptor for enterovirus 71. This Homo sapiens (Human) protein is P-selectin glycoprotein ligand 1 (SELPLG).